The sequence spans 278 residues: Pantothenate synthetase (278 aa).

26-33 (MGNLHEGH) serves as a coordination point for ATP. Catalysis depends on His33, which acts as the Proton donor. Gln57 contributes to the (R)-pantoate binding site. Gln57 serves as a coordination point for beta-alanine. 144–147 (GKKD) contacts ATP. Gln150 contacts (R)-pantoate. ATP contacts are provided by residues Gly173 and 181–184 (LSSR).

It belongs to the pantothenate synthetase family. In terms of assembly, homodimer.

It localises to the cytoplasm. The catalysed reaction is (R)-pantoate + beta-alanine + ATP = (R)-pantothenate + AMP + diphosphate + H(+). It functions in the pathway cofactor biosynthesis; (R)-pantothenate biosynthesis; (R)-pantothenate from (R)-pantoate and beta-alanine: step 1/1. Functionally, catalyzes the condensation of pantoate with beta-alanine in an ATP-dependent reaction via a pantoyl-adenylate intermediate. This is Pantothenate synthetase from Neisseria meningitidis serogroup A / serotype 4A (strain DSM 15465 / Z2491).